The sequence spans 138 residues: Large ribosomal subunit protein uL16 (138 aa).

The span at 1-17 (MLQPKRTKFRKQHKGRN) shows a compositional bias: basic residues. The disordered stretch occupies residues 1–22 (MLQPKRTKFRKQHKGRNRGVAT).

The protein belongs to the universal ribosomal protein uL16 family. In terms of assembly, part of the 50S ribosomal subunit.

Binds 23S rRNA and is also seen to make contacts with the A and possibly P site tRNAs. The sequence is that of Large ribosomal subunit protein uL16 from Acidithiobacillus ferrooxidans (strain ATCC 23270 / DSM 14882 / CIP 104768 / NCIMB 8455) (Ferrobacillus ferrooxidans (strain ATCC 23270)).